The following is a 163-amino-acid chain: Nucleotide-binding protein BLi01194 (163 aa).

The protein belongs to the YajQ family.

Its function is as follows. Nucleotide-binding protein. This Bacillus licheniformis (strain ATCC 14580 / DSM 13 / JCM 2505 / CCUG 7422 / NBRC 12200 / NCIMB 9375 / NCTC 10341 / NRRL NRS-1264 / Gibson 46) protein is Nucleotide-binding protein BLi01194.